Reading from the N-terminus, the 230-residue chain is Extracellular deoxyribonuclease (230 aa).

The first 20 residues, 1–20, serve as a signal peptide directing secretion; that stretch reads MFRPLLSLCLALLVSAPAHA.

The protein belongs to the EndA/NucM nuclease family.

The protein resides in the secreted. The sequence is that of Extracellular deoxyribonuclease (dns) from Aeromonas hydrophila.